The primary structure comprises 283 residues: Elongation factor Ts (283 aa).

Positions 79–82 are involved in Mg(2+) ion dislocation from EF-Tu; sequence TDFV.

Belongs to the EF-Ts family.

It localises to the cytoplasm. Functionally, associates with the EF-Tu.GDP complex and induces the exchange of GDP to GTP. It remains bound to the aminoacyl-tRNA.EF-Tu.GTP complex up to the GTP hydrolysis stage on the ribosome. In Shewanella baltica (strain OS155 / ATCC BAA-1091), this protein is Elongation factor Ts.